We begin with the raw amino-acid sequence, 226 residues long: PtdIns3K complex I subunit atg38 (226 aa).

Residue S2 is modified to N-acetylserine. Coiled-coil stretches lie at residues 52 to 85 and 182 to 209; these read DVTQAIDLLKQDITAKIQELELLIEKQSSEENNI and FKEYGMKIDEITKENKKLANEIGRLRER.

This sequence belongs to the ATG38 family. Homodimer. Component of the autophagy-specific VPS34 PI3-kinase complex I composed of VPS15, VPS30, VPS34, ATG14 and an ATG38 homodimer. Interacts directly with ATG14 and VPS34.

It is found in the cytoplasm. The protein resides in the preautophagosomal structure membrane. In terms of biological role, autophagy-related protein required for cytoplasm to vacuole transport (Cvt) and autophagy as a part of the autophagy-specific VPS34 PI3-kinase complex I. This complex is essential to recruit the ATG8-phosphatidylinositol conjugate and the ATG12-ATG5 conjugate to the pre-autophagosomal structure. ATG38 is required for the integrity of the active PI3-kinase complex I by maintaining an association between VPS15-VPS34 and ATG14-VPS30 subcomplexes. The chain is PtdIns3K complex I subunit atg38 from Saccharomyces cerevisiae (strain ATCC 204508 / S288c) (Baker's yeast).